A 389-amino-acid chain; its full sequence is Sterol methyltransferase-like 1 (389 aa).

Residues 25–45 (IAAGVTAAVVIGGYIWIITEL) form a helical membrane-spanning segment.

Belongs to the class I-like SAM-binding methyltransferase superfamily. Erg6/SMT family.

The protein resides in the microsome membrane. Its function is as follows. Unable to convert squalene, botryococcene, cycloartenol, zymosterol or lanosterol to mono-, di-, tri- or tetramethylated derivatives. The chain is Sterol methyltransferase-like 1 (SMT-1) from Botryococcus braunii (Green alga).